A 144-amino-acid chain; its full sequence is Probable 4-amino-4-deoxy-L-arabinose-phosphoundecaprenol flippase subunit ArnF (144 aa).

At 1–6 the chain is on the cytoplasmic side; the sequence is MTHRRA. Residues 7-24 form a helical membrane-spanning segment; it reads TLCAMASVALVSAAQLGM. Residues 25 to 56 lie on the Periplasmic side of the membrane; sequence RWSMSRLPSPVQWLEMQEHAQLDLSALRVVCA. The chain crosses the membrane as a helical span at residues 57-77; the sequence is SITAYALSMLFWLLALRVLPL. Topologically, residues 78–80 are cytoplasmic; sequence SRA. The helical transmembrane segment at 81-101 threads the bilayer; that stretch reads YSLLSISYALVYTLAATLPFF. Topologically, residues 102-104 are periplasmic; the sequence is HET. The helical transmembrane segment at 105–125 threads the bilayer; it reads FTVSKTVGVSLIVAGVLTINL. Residues 126–144 lie on the Cytoplasmic side of the membrane; the sequence is RRLPRPSPQDLSHENQRFR.

It belongs to the ArnF family. As to quaternary structure, heterodimer of ArnE and ArnF.

The protein resides in the cell inner membrane. Its pathway is bacterial outer membrane biogenesis; lipopolysaccharide biosynthesis. Its function is as follows. Translocates 4-amino-4-deoxy-L-arabinose-phosphoundecaprenol (alpha-L-Ara4N-phosphoundecaprenol) from the cytoplasmic to the periplasmic side of the inner membrane. The sequence is that of Probable 4-amino-4-deoxy-L-arabinose-phosphoundecaprenol flippase subunit ArnF from Pseudomonas syringae pv. syringae (strain B728a).